Here is a 175-residue protein sequence, read N- to C-terminus: Macro domain-containing protein TTE0995 (175 aa).

The 174-residue stretch at 1-174 (MKEKIKLIKG…VYSKAYEELD (174 aa)) folds into the Macro domain.

Belongs to the MacroD-type family.

This chain is Macro domain-containing protein TTE0995, found in Caldanaerobacter subterraneus subsp. tengcongensis (strain DSM 15242 / JCM 11007 / NBRC 100824 / MB4) (Thermoanaerobacter tengcongensis).